The primary structure comprises 548 residues: Chaperonin GroEL (548 aa).

ATP-binding positions include 29 to 32 (TLGP), Lys-50, 86 to 90 (DGTTT), Gly-416, and Asp-497.

It belongs to the chaperonin (HSP60) family. Forms a cylinder of 14 subunits composed of two heptameric rings stacked back-to-back. Interacts with the co-chaperonin GroES.

The protein resides in the cytoplasm. The catalysed reaction is ATP + H2O + a folded polypeptide = ADP + phosphate + an unfolded polypeptide.. Together with its co-chaperonin GroES, plays an essential role in assisting protein folding. The GroEL-GroES system forms a nano-cage that allows encapsulation of the non-native substrate proteins and provides a physical environment optimized to promote and accelerate protein folding. In Neorickettsia risticii (Ehrlichia risticii), this protein is Chaperonin GroEL.